The chain runs to 136 residues: Large ribosomal subunit protein bL17 (136 aa).

Belongs to the bacterial ribosomal protein bL17 family. As to quaternary structure, part of the 50S ribosomal subunit. Contacts protein L32.

The polypeptide is Large ribosomal subunit protein bL17 (Methylobacterium radiotolerans (strain ATCC 27329 / DSM 1819 / JCM 2831 / NBRC 15690 / NCIMB 10815 / 0-1)).